The chain runs to 536 residues: L-aspartate oxidase 2 (536 aa).

FAD is bound by residues E22–A25 and S51–G58. R284 (proton donor/acceptor) is an active-site residue. FAD-binding positions include E369 and S385–L386.

The protein belongs to the FAD-dependent oxidoreductase 2 family. NadB subfamily. FAD serves as cofactor.

It localises to the cytoplasm. The enzyme catalyses L-aspartate + O2 = iminosuccinate + H2O2. The protein operates within cofactor biosynthesis; NAD(+) biosynthesis; iminoaspartate from L-aspartate (oxidase route): step 1/1. In terms of biological role, catalyzes the oxidation of L-aspartate to iminoaspartate, the first step in the de novo biosynthesis of NAD(+). The protein is L-aspartate oxidase 2 (nadB2) of Ralstonia nicotianae (strain ATCC BAA-1114 / GMI1000) (Ralstonia solanacearum).